The primary structure comprises 142 residues: Translation initiation factor 2 subunit beta (142 aa).

It belongs to the eIF-2-beta/eIF-5 family. Heterotrimer composed of an alpha, a beta and a gamma chain.

Its function is as follows. eIF-2 functions in the early steps of protein synthesis by forming a ternary complex with GTP and initiator tRNA. This is Translation initiation factor 2 subunit beta from Staphylothermus marinus (strain ATCC 43588 / DSM 3639 / JCM 9404 / F1).